We begin with the raw amino-acid sequence, 122 residues long: Histone H2B subacrosomal variant (122 aa).

Residues 1 to 25 are compositionally biased toward basic residues; the sequence is MARNVTKRNKRCRGHQKAIYKKKSH. The tract at residues 1-30 is disordered; that stretch reads MARNVTKRNKRCRGHQKAIYKKKSHSSSES.

It belongs to the histone H2B family. As to expression, testis-specific. Restricted to the spermatid population of seminiferous epithelium. Not present in Sertoli cells, spermatogonia, spermatocytes or cells of the interstitial tissue (at protein level).

The protein resides in the cytoplasm. In terms of biological role, may act as an acrosome-nuclear docking protein in sperm. The chain is Histone H2B subacrosomal variant (SUBH2BV) from Bos taurus (Bovine).